The chain runs to 340 residues: Anthranilate phosphoribosyltransferase (340 aa).

5-phospho-alpha-D-ribose 1-diphosphate is bound by residues G82, 85–86 (GD), T90, 92–95 (NISS), 110–118 (KHGGRSVSS), and A122. Position 82 (G82) interacts with anthranilate. S94 lines the Mg(2+) pocket. Residue R168 coordinates anthranilate. 2 residues coordinate Mg(2+): D227 and E228.

Belongs to the anthranilate phosphoribosyltransferase family. In terms of assembly, homodimer. It depends on Mg(2+) as a cofactor.

It carries out the reaction N-(5-phospho-beta-D-ribosyl)anthranilate + diphosphate = 5-phospho-alpha-D-ribose 1-diphosphate + anthranilate. Its pathway is amino-acid biosynthesis; L-tryptophan biosynthesis; L-tryptophan from chorismate: step 2/5. Catalyzes the transfer of the phosphoribosyl group of 5-phosphorylribose-1-pyrophosphate (PRPP) to anthranilate to yield N-(5'-phosphoribosyl)-anthranilate (PRA). In Dechloromonas aromatica (strain RCB), this protein is Anthranilate phosphoribosyltransferase.